The chain runs to 613 residues: Autophagy-related protein 22-2 (613 aa).

Residues 1–30 (MAFNSTPPVSPGGEAQQRPPRFPGEDTTPT) form a disordered region. A helical membrane pass occupies residues 41 to 61 (YGIAAEVFAVCGVGSFLPLTL). An N-linked (GlcNAc...) asparagine glycan is attached at asparagine 90. The next 7 helical transmembrane spans lie at 120-140 (SFAM…LISF), 167-187 (LFIF…VVGV), 189-209 (CLGS…ANDP), 278-298 (VGLG…MLFA), 307-327 (ISGT…WFSF), 382-402 (VIIF…VSGT), and 418-438 (VGLL…LWPV). An N-linked (GlcNAc...) asparagine glycan is attached at asparagine 448. Helical transmembrane passes span 453–473 (LCIA…IPLF), 477–497 (GVVG…HGLV), 508–528 (FFGL…YAAT), and 553–573 (GFFF…MVNA). The disordered stretch occupies residues 592–613 (REHASEYGGPSEEAEGLLARDI).

It belongs to the ATG22 family.

Its subcellular location is the vacuole membrane. Its function is as follows. Vacuolar effluxer which mediate the efflux of amino acids resulting from autophagic degradation. The release of autophagic amino acids allows the maintenance of protein synthesis and viability during nitrogen starvation. The protein is Autophagy-related protein 22-2 (atg22-2) of Aspergillus fumigatus (strain ATCC MYA-4609 / CBS 101355 / FGSC A1100 / Af293) (Neosartorya fumigata).